The chain runs to 309 residues: Elongation factor Ts (309 aa).

The involved in Mg(2+) ion dislocation from EF-Tu stretch occupies residues 82-85 (TDFV).

This sequence belongs to the EF-Ts family.

It localises to the cytoplasm. Its function is as follows. Associates with the EF-Tu.GDP complex and induces the exchange of GDP to GTP. It remains bound to the aminoacyl-tRNA.EF-Tu.GTP complex up to the GTP hydrolysis stage on the ribosome. The protein is Elongation factor Ts of Rickettsia africae (strain ESF-5).